An 828-amino-acid chain; its full sequence is G-type lectin S-receptor-like serine/threonine-protein kinase At2g19130 (828 aa).

A signal peptide spans 1–22 (MVSFLTLTSFFFICFFIHGSSA). The 124-residue stretch at 23–146 (VDTISGDFTL…GSSLSANVLW (124 aa)) folds into the Bulb-type lectin domain. Topologically, residues 23–439 (VDTISGDFTL…GASGKSNNKG (417 aa)) are extracellular. Residues Asn-85, Asn-113, Asn-203, Asn-234, Asn-240, and Asn-255 are each glycosylated (N-linked (GlcNAc...) asparagine). The 37-residue stretch at 286–322 (PRQQCQVYRYCGSFGICSDKSEPFCRCPQGFRPMSQK) folds into the EGF-like domain. 4 disulfide bridges follow: Cys-290–Cys-302, Cys-296–Cys-310, Cys-372–Cys-394, and Cys-376–Cys-382. The 82-residue stretch at 341-422 (CSRGDINQFF…EGNIFYLRLA (82 aa)) folds into the PAN domain. A helical transmembrane segment spans residues 440–460 (LIFGAVLGSLGVIVLVLLVVI). Residues 461 to 828 (LILRYRRRKR…KKMTNDNSSA (368 aa)) lie on the Cytoplasmic side of the membrane. The Protein kinase domain maps to 493–770 (KNFSDKLGGG…QVVQILEGVL (278 aa)). Residues 499–507 (LGGGGFGSV) and Lys-521 contribute to the ATP site. Ser-527 is subject to Phosphoserine. The caM-binding stretch occupies residues 582-600 (VEEKIVLGWKLRFQIALGT). Asp-619 acts as the Proton acceptor in catalysis. Thr-653 carries the post-translational modification Phosphothreonine. The interval 796-828 (ESSSSSSHNSSQNHKHSSSSSSSKKMTNDNSSA) is disordered. Residues 797-828 (SSSSSSHNSSQNHKHSSSSSSSKKMTNDNSSA) show a composition bias toward low complexity. Phosphoserine is present on Ser-815.

It belongs to the protein kinase superfamily. Ser/Thr protein kinase family.

Its subcellular location is the cell membrane. It catalyses the reaction L-seryl-[protein] + ATP = O-phospho-L-seryl-[protein] + ADP + H(+). It carries out the reaction L-threonyl-[protein] + ATP = O-phospho-L-threonyl-[protein] + ADP + H(+). This is G-type lectin S-receptor-like serine/threonine-protein kinase At2g19130 from Arabidopsis thaliana (Mouse-ear cress).